The primary structure comprises 606 residues: Sulfite reductase [NADPH] flavoprotein alpha-component (606 aa).

A Flavodoxin-like domain is found at 68-206; that stretch reads ITILSASQTG…AAEAWRKEVT (139 aa). FMN is bound by residues 74–79, 121–124, and 157–166; these read SQTGNA, STQG, and LGDITYEHFA. Residues 240 to 454 enclose the FAD-binding FR-type domain; the sequence is ESPLTATLSV…VEHNDNFRLP (215 aa). Residues Thr-328, Gln-362, 392-395, 410-412, Tyr-416, and 425-428 contribute to the FAD site; these read RLYS, TVG, and GGAS. NADP(+) is bound by residues 525-526, 531-535, and Asp-568; these read SR and KVYVQ. Tyr-606 contacts FAD.

Belongs to the NADPH-dependent sulphite reductase flavoprotein subunit CysJ family. This sequence in the N-terminal section; belongs to the flavodoxin family. The protein in the C-terminal section; belongs to the flavoprotein pyridine nucleotide cytochrome reductase family. Alpha(8)-beta(8). The alpha component is a flavoprotein, the beta component is a hemoprotein. FAD serves as cofactor. Requires FMN as cofactor.

It catalyses the reaction hydrogen sulfide + 3 NADP(+) + 3 H2O = sulfite + 3 NADPH + 4 H(+). It participates in sulfur metabolism; hydrogen sulfide biosynthesis; hydrogen sulfide from sulfite (NADPH route): step 1/1. Its function is as follows. Component of the sulfite reductase complex that catalyzes the 6-electron reduction of sulfite to sulfide. This is one of several activities required for the biosynthesis of L-cysteine from sulfate. The flavoprotein component catalyzes the electron flow from NADPH -&gt; FAD -&gt; FMN to the hemoprotein component. The protein is Sulfite reductase [NADPH] flavoprotein alpha-component of Zymomonas mobilis subsp. mobilis (strain ATCC 31821 / ZM4 / CP4).